We begin with the raw amino-acid sequence, 52 residues long: ATP synthase protein 8 (52 aa).

The chain crosses the membrane as a helical span at residues 7-23 (MMWFSLFIMFSMTMMLF).

The protein belongs to the ATPase protein 8 family. As to quaternary structure, F-type ATPases have 2 components, CF(1) - the catalytic core - and CF(0) - the membrane proton channel.

Its subcellular location is the mitochondrion membrane. Its function is as follows. Mitochondrial membrane ATP synthase (F(1)F(0) ATP synthase or Complex V) produces ATP from ADP in the presence of a proton gradient across the membrane which is generated by electron transport complexes of the respiratory chain. F-type ATPases consist of two structural domains, F(1) - containing the extramembraneous catalytic core and F(0) - containing the membrane proton channel, linked together by a central stalk and a peripheral stalk. During catalysis, ATP synthesis in the catalytic domain of F(1) is coupled via a rotary mechanism of the central stalk subunits to proton translocation. Part of the complex F(0) domain. Minor subunit located with subunit a in the membrane. This chain is ATP synthase protein 8 (MT-ATP8), found in Locusta migratoria (Migratory locust).